The sequence spans 156 residues: ATP synthase subunit b (156 aa).

A helical membrane pass occupies residues 5–25 (LTLIVQMLVFAAFVLFTMKLV).

This sequence belongs to the ATPase B chain family. As to quaternary structure, F-type ATPases have 2 components, F(1) - the catalytic core - and F(0) - the membrane proton channel. F(1) has five subunits: alpha(3), beta(3), gamma(1), delta(1), epsilon(1). F(0) has three main subunits: a(1), b(2) and c(10-14). The alpha and beta chains form an alternating ring which encloses part of the gamma chain. F(1) is attached to F(0) by a central stalk formed by the gamma and epsilon chains, while a peripheral stalk is formed by the delta and b chains.

Its subcellular location is the cell inner membrane. Functionally, f(1)F(0) ATP synthase produces ATP from ADP in the presence of a proton or sodium gradient. F-type ATPases consist of two structural domains, F(1) containing the extramembraneous catalytic core and F(0) containing the membrane proton channel, linked together by a central stalk and a peripheral stalk. During catalysis, ATP synthesis in the catalytic domain of F(1) is coupled via a rotary mechanism of the central stalk subunits to proton translocation. Component of the F(0) channel, it forms part of the peripheral stalk, linking F(1) to F(0). In Legionella pneumophila (strain Paris), this protein is ATP synthase subunit b.